The following is a 265-amino-acid chain: U6 snRNA phosphodiesterase 1 (265 aa).

The interval methionine 1–histidine 67 is disordered. Over residues alanine 20 to serine 32 the composition is skewed to basic and acidic residues. Residue histidine 120 is the Proton acceptor of the active site. Histidine 120–serine 122 is an AMP binding site. UMP-binding positions include glutamine 164, tyrosine 202, and serine 206–serine 210. Residues tyrosine 202 and aspartate 204–serine 210 contribute to the AMP site. The active-site Proton donor is the histidine 208.

It belongs to the 2H phosphoesterase superfamily. USB1 family. Interacts with PLRG1, CDC5L and PRPF19.

Its subcellular location is the nucleus. It catalyses the reaction a 3'-end uridylyl-uridine-RNA = a 3'-end 2',3'-cyclophospho-uridine-RNA + uridine. The catalysed reaction is a 3'-end uridylyl-adenosine-RNA = a 3'-end 2',3'-cyclophospho-uridine-RNA + adenosine. Its function is as follows. 3'-5' RNA exonuclease that trims the 3' end of oligo(U) and oligo(A) tracts of the pre-U6 small nuclear RNA (snRNA) molecule, leading to the formation of a mature U6 snRNA 3' end-terminated with a 2',3'-cyclic phosphate. Participates in the U6 snRNA 3' end processing that prevents U6 snRNA degradation. In addition also removes uridines from the 3' end of U6atac snRNA and possibly the vault RNA VTRNA1-1. The chain is U6 snRNA phosphodiesterase 1 from Bos taurus (Bovine).